Here is a 118-residue protein sequence, read N- to C-terminus: Small ribosomal subunit protein uS13 (118 aa).

The disordered stretch occupies residues R92–K118.

The protein belongs to the universal ribosomal protein uS13 family. As to quaternary structure, part of the 30S ribosomal subunit. Forms a loose heterodimer with protein S19. Forms two bridges to the 50S subunit in the 70S ribosome.

Its function is as follows. Located at the top of the head of the 30S subunit, it contacts several helices of the 16S rRNA. In the 70S ribosome it contacts the 23S rRNA (bridge B1a) and protein L5 of the 50S subunit (bridge B1b), connecting the 2 subunits; these bridges are implicated in subunit movement. Contacts the tRNAs in the A and P-sites. This Yersinia enterocolitica serotype O:8 / biotype 1B (strain NCTC 13174 / 8081) protein is Small ribosomal subunit protein uS13.